The sequence spans 216 residues: MKRPAYMSEVPVNHTSGQEARCVYLTFDDGPNPFCTPQILDVLAEHRVPATFFAIGSYVKDHPELIRRLVAEGHDVANHTMTHPDLATCDPKDVKREIDEAHQAIVSACPQALVRHLRAPYGVWTEDVLSASVRAGLGAVHWSADPRDWSCPGVDVIVDEVLAAARPGAIVLLHDGCPPDEVEQCSLAGLRDQTLIALSRIIPALHSRGFEIRSLP.

Residues 21 to 213 (RCVYLTFDDG…ALHSRGFEIR (193 aa)) enclose the NodB homology domain. The active-site Proton acceptor is aspartate 28. A divalent metal cation contacts are provided by histidine 79 and histidine 83. Histidine 174 acts as the Proton donor in catalysis.

It belongs to the polysaccharide deacetylase family.

It is found in the cytoplasm. Is involved in generating a small heat-stable compound (Nod), an acylated oligomer of N-acetylglucosamine, that stimulates mitosis in various plant protoplasts. This Rhizobium leguminosarum bv. viciae protein is Chitooligosaccharide deacetylase (nodB).